Reading from the N-terminus, the 606-residue chain is Leucine-rich repeat and immunoglobulin-like domain-containing nogo receptor-interacting protein 2 (606 aa).

Positions 1–27 (MLHTAISCWQPFLGLAVVLIFMGSTIG) are cleaved as a signal peptide. The region spanning 28 to 57 (CPARCECSAQNKSVSCHRRRLIAIPEGIPI) is the LRRNT domain. Residues 28–545 (CPARCECSAQ…LDLKTILVST (518 aa)) are Extracellular-facing. N-linked (GlcNAc...) asparagine glycosylation occurs at N38. 12 LRR repeats span residues 58-79 (ETKI…EFIS), 82-103 (LLEE…AFNN), 106-127 (NLRS…VFTG), 130-151 (NLTK…MFQD), 154-175 (NLKS…AFSG), 178-199 (SLEQ…ALSH), 202-223 (SLIS…AFKR), 226-247 (HLKH…NSLY), 250-271 (NLTS…AFKH), 274-295 (YLTH…MFSD), 298-319 (RLQE…SFQG), and 322-343 (FLRV…VFSS). An N-linked (GlcNAc...) asparagine glycan is attached at N130. N-linked (GlcNAc...) asparagine glycosylation is present at N188. The N-linked (GlcNAc...) asparagine glycan is linked to N279. An N-linked (GlcNAc...) asparagine glycan is attached at N327. The LRRCT domain maps to 355 to 409 (NPLACDCRLLWILQRQPTLQFGGQQPMCAGPDTIRERSFKDFHSTALSFYFTCKK). Positions 410–499 (PKIREKKLQH…GNDTFTASLT (90 aa)) constitute an Ig-like C2-type domain. A disulfide bond links C432 and C483. A helical transmembrane segment spans residues 546–566 (AMGCFTFLGVVLFCFLLLFVW). Over 567–606 (SRGKGKHKNSIDLEYVPRKNNGAVVEGEVAGPRRFNMKMI) the chain is Cytoplasmic.

The protein resides in the membrane. This is Leucine-rich repeat and immunoglobulin-like domain-containing nogo receptor-interacting protein 2 (LINGO2) from Homo sapiens (Human).